A 158-amino-acid polypeptide reads, in one-letter code: Ribosome maturation factor RimP (158 aa).

Belongs to the RimP family.

The protein localises to the cytoplasm. In terms of biological role, required for maturation of 30S ribosomal subunits. The chain is Ribosome maturation factor RimP from Pseudomonas savastanoi pv. phaseolicola (strain 1448A / Race 6) (Pseudomonas syringae pv. phaseolicola (strain 1448A / Race 6)).